We begin with the raw amino-acid sequence, 356 residues long: Torsin-like protein (356 aa).

The signal sequence occupies residues 1–18; it reads MKLDYVLLLLFHLCFVNT. ATP is bound at residue 110-117; that stretch reads GYTGSGKN. N-linked (GlcNAc...) asparagine glycans are attached at residues asparagine 125 and asparagine 250.

Belongs to the ClpA/ClpB family. Torsin subfamily.

Its subcellular location is the endoplasmic reticulum lumen. Functionally, may serve as a molecular chaperone assisting in the proper folding of secreted and/or membrane proteins. The sequence is that of Torsin-like protein (ooc-5) from Caenorhabditis elegans.